A 469-amino-acid chain; its full sequence is ATP synthase subunit beta (469 aa).

155–162 (GGAGVGKT) contributes to the ATP binding site.

This sequence belongs to the ATPase alpha/beta chains family. As to quaternary structure, F-type ATPases have 2 components, CF(1) - the catalytic core - and CF(0) - the membrane proton channel. CF(1) has five subunits: alpha(3), beta(3), gamma(1), delta(1), epsilon(1). CF(0) has three main subunits: a(1), b(2) and c(9-12). The alpha and beta chains form an alternating ring which encloses part of the gamma chain. CF(1) is attached to CF(0) by a central stalk formed by the gamma and epsilon chains, while a peripheral stalk is formed by the delta and b chains.

It is found in the cell inner membrane. The catalysed reaction is ATP + H2O + 4 H(+)(in) = ADP + phosphate + 5 H(+)(out). Its function is as follows. Produces ATP from ADP in the presence of a proton gradient across the membrane. The catalytic sites are hosted primarily by the beta subunits. In Helicobacter pylori (strain P12), this protein is ATP synthase subunit beta.